Here is a 341-residue protein sequence, read N- to C-terminus: MENAIRSLQQEISEYELASIKDIEAFRLRYTVRKGLIAGLFGQLKSVLPADKPRMGQLLNQLRQTADDKLAAATAELASAESKTEPKLDLTLPGRRTFIGSEHPVQKVLGEMKGIFSSMGFSIATGPELELDRYNFDLLNFPPDHPARDMQDTFFITRGNANGDVLLRTHTSPVQIRVMLDQKPPIRVICPGKVYRNEAISSRSYCVFHQLEGLYIDKGVSFADLKATIFSFAHQMFGSDVKLRFRPSFFPFTEPSAEVDVSCYLCGGKGCRVCKKSGWLEIMGCGMVHPNVMRNSGIDPEKWSGYAFGMGVDRTVLLRYKIDDIRLLFENDVRMLRQFPA.

Residue Glu254 coordinates Mg(2+).

This sequence belongs to the class-II aminoacyl-tRNA synthetase family. Phe-tRNA synthetase alpha subunit type 1 subfamily. As to quaternary structure, tetramer of two alpha and two beta subunits. Mg(2+) serves as cofactor.

It is found in the cytoplasm. The enzyme catalyses tRNA(Phe) + L-phenylalanine + ATP = L-phenylalanyl-tRNA(Phe) + AMP + diphosphate + H(+). The protein is Phenylalanine--tRNA ligase alpha subunit of Chlorobium phaeobacteroides (strain DSM 266 / SMG 266 / 2430).